The following is a 218-amino-acid chain: Small ribosomal subunit protein uS4 (218 aa).

One can recognise an S4 RNA-binding domain in the interval 111 to 175; the sequence is RRLQTQVLRL…SPLKNESHPE (65 aa). Residues 192-218 form a disordered region; sequence KAAAEAKQAREKPPERGGGRRKRGGRR. Over residues 198-209 the composition is skewed to basic and acidic residues; it reads KQAREKPPERGG.

This sequence belongs to the universal ribosomal protein uS4 family. As to quaternary structure, part of the 30S ribosomal subunit. Contacts protein S5. The interaction surface between S4 and S5 is involved in control of translational fidelity.

Functionally, one of the primary rRNA binding proteins, it binds directly to 16S rRNA where it nucleates assembly of the body of the 30S subunit. In terms of biological role, with S5 and S12 plays an important role in translational accuracy. This Methanosarcina acetivorans (strain ATCC 35395 / DSM 2834 / JCM 12185 / C2A) protein is Small ribosomal subunit protein uS4.